Reading from the N-terminus, the 755-residue chain is 1,4-alpha-glucan branching enzyme GlgB (755 aa).

Asp-431 acts as the Nucleophile in catalysis. Catalysis depends on Glu-484, which acts as the Proton donor.

Belongs to the glycosyl hydrolase 13 family. GlgB subfamily. Monomer.

It catalyses the reaction Transfers a segment of a (1-&gt;4)-alpha-D-glucan chain to a primary hydroxy group in a similar glucan chain.. It functions in the pathway glycan biosynthesis; glycogen biosynthesis. Functionally, catalyzes the formation of the alpha-1,6-glucosidic linkages in glycogen by scission of a 1,4-alpha-linked oligosaccharide from growing alpha-1,4-glucan chains and the subsequent attachment of the oligosaccharide to the alpha-1,6 position. In Prochlorococcus marinus (strain NATL1A), this protein is 1,4-alpha-glucan branching enzyme GlgB.